We begin with the raw amino-acid sequence, 285 residues long: CCR4-NOT transcription complex subunit 7 (285 aa).

Aspartate 40, glutamate 42, aspartate 161, aspartate 230, and glutamate 278 together coordinate a divalent metal cation.

Belongs to the CAF1 family. In terms of assembly, component of the CCR4-NOT complex. Requires Mn(2+) as cofactor. Mg(2+) serves as cofactor. The cofactor is Co(2+).

The protein localises to the nucleus. Its subcellular location is the cytoplasm. It catalyses the reaction Exonucleolytic cleavage of poly(A) to 5'-AMP.. Its function is as follows. Has 3'-5' poly(A) exoribonuclease activity for synthetic poly(A) RNA substrate. Catalytic component of the CCR4-NOT complex which is one of the major cellular mRNA deadenylases and is linked to various cellular processes including bulk mRNA degradation, miRNA-mediated repression, translational repression during translational initiation and general transcription regulation. During miRNA-mediated repression the complex also seems to act as translational repressor during translational initiation. Additional complex functions may be a consequence of its influence on mRNA expression. The sequence is that of CCR4-NOT transcription complex subunit 7 (cnot7) from Xenopus laevis (African clawed frog).